The following is a 150-amino-acid chain: Lymphocyte antigen 6 complex locus protein G5c (150 aa).

The signal sequence occupies residues methionine 1 to glycine 41. The UPAR/Ly6 domain maps to leucine 60–proline 150. 4 cysteine pairs are disulfide-bonded: cysteine 62/cysteine 89, cysteine 65/cysteine 74, cysteine 81/cysteine 107, and cysteine 134/cysteine 139. N-linked (GlcNAc...) asparagine glycosylation is present at asparagine 96.

As to quaternary structure, forms oligomers. In terms of processing, N-glycosylated. In terms of tissue distribution, detected in T-cell lines and fetal and adult lung.

It is found in the secreted. May have a role in hematopoietic cell differentiation. The chain is Lymphocyte antigen 6 complex locus protein G5c (LY6G5C) from Homo sapiens (Human).